The sequence spans 116 residues: MKYSGYHLVIDLFGCNFDQLENTEYMIEMLKKLAEALDTTIIAKAFHKFHPQGFSGALIISESHITIHTWPEDAYIGIDIFTCSKCFDSRKIVAYLKENLIFKKAEIKEILRGKID.

Catalysis depends on Ser63, which acts as the Schiff-base intermediate with substrate; via pyruvic acid. Ser63 is subject to Pyruvic acid (Ser); by autocatalysis. Catalysis depends on His68, which acts as the Proton acceptor; for processing activity. Cys83 serves as the catalytic Proton donor; for catalytic activity.

The protein belongs to the prokaryotic AdoMetDC family. Type 1 subfamily. As to quaternary structure, heterotetramer of two alpha and two beta chains arranged as a dimer of alpha/beta heterodimers. Requires pyruvate as cofactor. Post-translationally, is synthesized initially as an inactive proenzyme. Formation of the active enzyme involves a self-maturation process in which the active site pyruvoyl group is generated from an internal serine residue via an autocatalytic post-translational modification. Two non-identical subunits are generated from the proenzyme in this reaction, and the pyruvate is formed at the N-terminus of the alpha chain, which is derived from the carboxyl end of the proenzyme. The post-translation cleavage follows an unusual pathway, termed non-hydrolytic serinolysis, in which the side chain hydroxyl group of the serine supplies its oxygen atom to form the C-terminus of the beta chain, while the remainder of the serine residue undergoes an oxidative deamination to produce ammonia and the pyruvoyl group blocking the N-terminus of the alpha chain.

The catalysed reaction is S-adenosyl-L-methionine + H(+) = S-adenosyl 3-(methylsulfanyl)propylamine + CO2. The protein operates within amine and polyamine biosynthesis; S-adenosylmethioninamine biosynthesis; S-adenosylmethioninamine from S-adenosyl-L-methionine: step 1/1. Its function is as follows. Catalyzes the decarboxylation of S-adenosylmethionine to S-adenosylmethioninamine (dcAdoMet), the propylamine donor required for the synthesis of the polyamines spermine and spermidine from the diamine putrescine. This is S-adenosylmethionine decarboxylase proenzyme from Clostridium botulinum (strain 657 / Type Ba4).